A 94-amino-acid chain; its full sequence is Pyrimidine/purine nucleoside phosphorylase (94 aa).

This sequence belongs to the nucleoside phosphorylase PpnP family.

It catalyses the reaction a purine D-ribonucleoside + phosphate = a purine nucleobase + alpha-D-ribose 1-phosphate. The enzyme catalyses adenosine + phosphate = alpha-D-ribose 1-phosphate + adenine. The catalysed reaction is cytidine + phosphate = cytosine + alpha-D-ribose 1-phosphate. It carries out the reaction guanosine + phosphate = alpha-D-ribose 1-phosphate + guanine. It catalyses the reaction inosine + phosphate = alpha-D-ribose 1-phosphate + hypoxanthine. The enzyme catalyses thymidine + phosphate = 2-deoxy-alpha-D-ribose 1-phosphate + thymine. The catalysed reaction is uridine + phosphate = alpha-D-ribose 1-phosphate + uracil. It carries out the reaction xanthosine + phosphate = alpha-D-ribose 1-phosphate + xanthine. In terms of biological role, catalyzes the phosphorolysis of diverse nucleosides, yielding D-ribose 1-phosphate and the respective free bases. Can use uridine, adenosine, guanosine, cytidine, thymidine, inosine and xanthosine as substrates. Also catalyzes the reverse reactions. This chain is Pyrimidine/purine nucleoside phosphorylase, found in Pectobacterium carotovorum subsp. carotovorum (strain PC1).